A 377-amino-acid polypeptide reads, in one-letter code: All-trans-retinol dehydrogenase [NAD(+)] ADH4 (377 aa).

C47 is a Zn(2+) binding site. 48-49 serves as a coordination point for NAD(+); it reads PT. Residues H68, C98, C101, C104, C112, and C179 each coordinate Zn(2+). NAD(+) contacts are provided by residues 204-209, D228, K233, 297-299, 320-322, and R372; these read GLGCVG, VGA, and TFF.

This sequence belongs to the zinc-containing alcohol dehydrogenase family. Class-II subfamily. Dimer. Zn(2+) serves as cofactor. Liver specific.

It localises to the cytoplasm. It carries out the reaction all-trans-retinol + NAD(+) = all-trans-retinal + NADH + H(+). The enzyme catalyses 9-cis-retinol + NAD(+) = 9-cis-retinal + NADH + H(+). The catalysed reaction is 20-oxo-(5Z,8Z,11Z,14Z)-eicosatetraenoate + NAD(+) + H2O = (5Z,8Z,11Z,14Z)-eicosatetraenedioate + NADH + 2 H(+). It catalyses the reaction 20-hydroxy-(5Z,8Z,11Z,14Z)-eicosatetraenoate + NAD(+) = 20-oxo-(5Z,8Z,11Z,14Z)-eicosatetraenoate + NADH + H(+). It carries out the reaction 1,4-benzoquinone + NADH + H(+) = hydroquinone + NAD(+). Oxidation of 20-HETE is inhibited by low concentrations of N-heptylformamide. Oxidation of 20-HETE is a decreased by 55-65% by either all-trans-retinol or all-trans-retinoic acid. Strongly inhibited by omega-hydroxy fatty acids. Its function is as follows. Catalyzes the NAD-dependent oxidation of either all-trans-retinol or 9-cis-retinol. Also oxidizes long chain omega-hydroxy fatty acids, such as 20-HETE, producing both the intermediate aldehyde, 20-oxoarachidonate and the end product, a dicarboxylic acid, (5Z,8Z,11Z,14Z)-eicosatetraenedioate. Also catalyzes the reduction of benzoquinones. The chain is All-trans-retinol dehydrogenase [NAD(+)] ADH4 from Rattus norvegicus (Rat).